The chain runs to 123 residues: CD59 glycoprotein (123 aa).

Residues 1 to 25 (MGSKGGFILLWLLSILAVLCHLGHS) form the signal peptide. Positions 26–103 (LQCYNCINPA…LCNKSDATIS (78 aa)) constitute a UPAR/Ly6 domain. Cystine bridges form between Cys-28–Cys-51, Cys-31–Cys-38, Cys-44–Cys-65, Cys-71–Cys-89, and Cys-90–Cys-95. Asn-43 carries N-linked (GlcNAc...) asparagine glycosylation. Ser-98 carries the GPI-anchor amidated serine lipid modification. The propeptide at 99-123 (DATISSGKTALLVILLLVATWHFCL) is removed in mature form.

Interacts with T-cell surface antigen CD2. In terms of processing, N- and O-glycosylated. Expressed in all tissues tested (lung, testis liver, kidney, spleen, heart and skeletal muscle). Highest levels in lung and spleen, lowest levels in liver and skeletal muscle.

Its subcellular location is the cell membrane. The protein localises to the secreted. In terms of biological role, potent inhibitor of the complement membrane attack complex (MAC) action, which protects self-cells from damage during complement activation. Acts by binding to the beta-haipins of C8 (C8A and C8B) components of the assembling MAC, forming an intermolecular beta-sheet that prevents incorporation of the multiple copies of C9 required for complete formation of the osmolytic pore. The polypeptide is CD59 glycoprotein (Sus scrofa (Pig)).